The chain runs to 470 residues: MENRTPMQHHSGYEIVKSEPPSTPKTLIKSSYMENTPEMVFGSFPIHSGFCTQVVTHTDPMNNNNQPKTNANGRALAADRKRPYPCNLCSSKFGSKMELEEHQNSHTGQKPFECDTCNARFNRRSTLWNHKRIHSDAKPFVCTVCQMTFKWKNSLKCHKDMHQRKNETSAHLDNDLRQLTYATAAKRKLQMEQEENGGLPASSSASSVISHPLITTTSGNKKRSKAAKAKQTPSSLATTLSQVHLGAVQPLHASALVPPSDHQIDLDTTSLDSLMQSQNQNFLMQLYGYSDDGRHNGGMLSLDDTMLSNLSDSKSDSGSSSGGLSIQLPMQTINMLNFRNLGTQQLPPVHQLASSLPSVSSGMDYVNVNQHDSHYIVSQPDMMLGNQPLYHNGSFANIEKSNPHNNQFTIDSCVLLPSSRQDYPFDYTMVNQQYPMQEQVHDQTVGVSVVQQHYAEQAHAHGKTVPHEQW.

The tract at residues 1–25 (MENRTPMQHHSGYEIVKSEPPSTPK) is disordered. C2H2-type zinc fingers lie at residues 84–106 (YPCN…QNSH), 112–134 (FECD…KRIH), and 140–162 (FVCT…KDMH). The disordered stretch occupies residues 191 to 235 (MEQEENGGLPASSSASSVISHPLITTTSGNKKRSKAAKAKQTPSS). The short motif at 221–230 (KKRSKAAKAK) is the Nuclear localization signal element.

Belongs to the krueppel C2H2-type zinc-finger protein family. As to expression, expressed in body wall muscle and gonad (at protein level).

The protein resides in the nucleus. It localises to the chromosome. In terms of biological role, probable transcription factor; required for proper organization of muscle myofilaments and for their recruitment to the M line. The chain is Zinc finger protein pat-9 from Caenorhabditis elegans.